A 258-amino-acid polypeptide reads, in one-letter code: MDDDHEQLVEELEAVEAIYPDLLSKKQEDGSIIVVKVPQHEYMTLQISFPTHYPSEEAPNVIEVGVCTSLAKRDLYDTKYLQHLFQEVMDSVFHRGSVCLFDFLTELDGVLYVEPEEETEPVQQSDIPTDPFEGWTASDPITDRGSTFMAFAAHVTSEEQAFAMLDLLKTDSKMRKANHVMSAWRIKQDGSAATYQDSDDDGETAAGSRMLHLITIMDVWNVIVVVARWFGGAHIGPDRFKHINSTAREAVVRAGFDS.

One can recognise an RWD domain in the interval 10-114 (EELEAVEAIY…TELDGVLYVE (105 aa)). Residue K187 forms a Glycyl lysine isopeptide (Lys-Gly) (interchain with G-Cter in ubiquitin) linkage.

This sequence belongs to the IMPACT family. In terms of assembly, interacts (via N-terminus) with GCN1 (via C-terminus); this interaction reduces the GCN1-GCN20 complex formation and prevents the interaction of GCN1 with GCN2 protein kinase and GCN2 activation in amino acid-starved cells. Interacts (via C-terminus) with ACT1; this interaction occurs in a GCN1-independent manner. Interacts with RPL39; this interaction occurs in a GCN1-independent manner. Associates (via middle region) with ribosomes; this association occurs in a GCN1-independent manner and persists under amino acid starvation conditions.

It localises to the cytoplasm. Its subcellular location is the nucleus. Its function is as follows. Translational regulator that ensures constant high levels of translation under amino acid starvation. Plays a role as a negative regulator of the GCN2 kinase activity; impairs GCN1-mediated GCN2 activation, and hence GCN2-mediated eIF-2-alpha phosphorylation in amino acid-starved cells and subsequent down-regulation of protein synthesis. In normal conditions, it resides in a actin complex and has no activity. The sequence is that of Protein IMPACT homolog (YIH1) from Saccharomyces cerevisiae (strain ATCC 204508 / S288c) (Baker's yeast).